The primary structure comprises 236 residues: Potassium/proton antiporter CemA (236 aa).

Transmembrane regions (helical) follow at residues 12–32 (TVTS…TNHV), 114–134 (IANV…LLLG), 161–181 (IILF…EILI), and 196–216 (FIFL…KYWI).

It belongs to the CemA family.

The protein localises to the plastid. It is found in the chloroplast inner membrane. It carries out the reaction K(+)(in) + H(+)(out) = K(+)(out) + H(+)(in). In terms of biological role, contributes to K(+)/H(+) antiport activity by supporting proton efflux to control proton extrusion and homeostasis in chloroplasts in a light-dependent manner to modulate photosynthesis. Prevents excessive induction of non-photochemical quenching (NPQ) under continuous-light conditions. Indirectly promotes efficient inorganic carbon uptake into chloroplasts. The sequence is that of Potassium/proton antiporter CemA from Chlorokybus atmophyticus (Soil alga).